Here is a 66-residue protein sequence, read N- to C-terminus: Large ribosomal subunit protein bL35 (66 aa).

This sequence belongs to the bacterial ribosomal protein bL35 family.

This chain is Large ribosomal subunit protein bL35, found in Brucella melitensis biotype 1 (strain ATCC 23456 / CCUG 17765 / NCTC 10094 / 16M).